The primary structure comprises 2609 residues: Beige protein homolog 1 (2609 aa).

Disordered regions lie at residues 1654–1679 and 1691–1729; these read DSKL…APVS and ILPS…KNRT. The span at 1711-1723 shows a compositional bias: acidic residues; it reads MEDEEDDVDEEDK. The region spanning 1735 to 1870 is the BEACH-type PH domain; that stretch reads ESGDSIQDVY…NRDSLYQKLV (136 aa). Residues 1907-2202 enclose the BEACH domain; the sequence is ANALSFSTTH…QVFKKPHPQR (296 aa). WD repeat units follow at residues 2249–2290, 2294–2332, 2340–2379, 2429–2475, and 2507–2546; these read KDEV…QPVM, LHSE…PIKA, GHRY…FVSS, NSDE…NAKL, and ATRQ…SNVH. The segment at 2550–2604 adopts an FYVE-type zinc-finger fold; it reads DNTSELCSLCDSRFSLMEWRSQCRACGNSNVCSDCVSMLKDTNIKTCYECYRQMP.

Its subcellular location is the cytoplasm. The protein localises to the membrane. Functionally, may be involved in protein sorting and cell wall formation. The chain is Beige protein homolog 1 (lvs1) from Schizosaccharomyces pombe (strain 972 / ATCC 24843) (Fission yeast).